Consider the following 240-residue polypeptide: Small ribosomal subunit protein uS2 (240 aa).

This sequence belongs to the universal ribosomal protein uS2 family. As to quaternary structure, component of the small ribosomal subunit. Mature ribosomes consist of a small (40S) and a large (60S) subunit. The 40S subunit contains about 33 different proteins and 1 molecule of RNA (18S). The 60S subunit contains about 49 different proteins and 3 molecules of RNA (25S, 5.8S and 5S). Interacts with RPS21.

Its subcellular location is the cytoplasm. In terms of biological role, required for the assembly and/or stability of the 40S ribosomal subunit. Required for the processing of the 20S rRNA-precursor to mature 18S rRNA in a late step of the maturation of 40S ribosomal subunits. The polypeptide is Small ribosomal subunit protein uS2 (Enterocytozoon bieneusi (strain H348) (Microsporidian parasite)).